We begin with the raw amino-acid sequence, 147 residues long: Deoxyuridine 5'-triphosphate nucleotidohydrolase (147 aa).

Residues 67–69 (RSG), N80, and 84–86 (TID) each bind substrate.

This sequence belongs to the dUTPase family. Mg(2+) serves as cofactor.

The catalysed reaction is dUTP + H2O = dUMP + diphosphate + H(+). The protein operates within pyrimidine metabolism; dUMP biosynthesis; dUMP from dCTP (dUTP route): step 2/2. This enzyme is involved in nucleotide metabolism: it produces dUMP, the immediate precursor of thymidine nucleotides and it decreases the intracellular concentration of dUTP so that uracil cannot be incorporated into DNA. This chain is Deoxyuridine 5'-triphosphate nucleotidohydrolase, found in Anaeromyxobacter dehalogenans (strain 2CP-C).